The following is a 112-amino-acid chain: UPF0060 membrane protein SCO3297 (112 aa).

4 helical membrane-spanning segments follow: residues 8 to 28, 33 to 53, 62 to 82, and 88 to 108; these read ALFV…WQGV, GWLW…VATF, ILAA…VVAD, and RWDI…MWAP.

Belongs to the UPF0060 family.

The protein localises to the cell membrane. In Streptomyces coelicolor (strain ATCC BAA-471 / A3(2) / M145), this protein is UPF0060 membrane protein SCO3297.